The following is a 209-amino-acid chain: ATP-dependent Clp protease proteolytic subunit (209 aa).

Residue S103 is the Nucleophile of the active site. Residue H128 is part of the active site.

The protein belongs to the peptidase S14 family. Fourteen ClpP subunits assemble into 2 heptameric rings which stack back to back to give a disk-like structure with a central cavity, resembling the structure of eukaryotic proteasomes.

The protein localises to the cytoplasm. The catalysed reaction is Hydrolysis of proteins to small peptides in the presence of ATP and magnesium. alpha-casein is the usual test substrate. In the absence of ATP, only oligopeptides shorter than five residues are hydrolyzed (such as succinyl-Leu-Tyr-|-NHMec, and Leu-Tyr-Leu-|-Tyr-Trp, in which cleavage of the -Tyr-|-Leu- and -Tyr-|-Trp bonds also occurs).. Cleaves peptides in various proteins in a process that requires ATP hydrolysis. Has a chymotrypsin-like activity. Plays a major role in the degradation of misfolded proteins. The chain is ATP-dependent Clp protease proteolytic subunit from Lawsonia intracellularis (strain PHE/MN1-00).